The sequence spans 549 residues: Membrane protein insertase YidC (549 aa).

Residues 8–28 traverse the membrane as a helical segment; sequence VLLATVLSVAVLIVWQFVFPS. The segment covering 29 to 39 has biased composition (pro residues); it reads PKPKPQPPKPP. The segment at 29 to 68 is disordered; it reads PKPKPQPPKPPEAAQRAEAPAAPAPGQPAAQAPAPAVPQD. Composition is skewed to low complexity over residues 40 to 49 and 55 to 68; these read EAAQRAEAPA and QPAA…VPQD. 4 helical membrane passes run 328–348, 354–374, 424–444, and 502–522; these read IDYG…LFVM, LVAN…VLLY, LGGC…YATL, and PGFF…YIFV.

Belongs to the OXA1/ALB3/YidC family. Type 1 subfamily. Interacts with the Sec translocase complex via SecD. Specifically interacts with transmembrane segments of nascent integral membrane proteins during membrane integration.

Its subcellular location is the cell inner membrane. Required for the insertion and/or proper folding and/or complex formation of integral membrane proteins into the membrane. Involved in integration of membrane proteins that insert both dependently and independently of the Sec translocase complex, as well as at least some lipoproteins. Aids folding of multispanning membrane proteins. The protein is Membrane protein insertase YidC of Anaeromyxobacter sp. (strain Fw109-5).